A 463-amino-acid polypeptide reads, in one-letter code: MTKDMETIVSLAKHRGFVFPGSDIYGGLSNTWDYGPLGVELKNNVKKAWWQKFITQSPYNVGIDAAILMNPKTWEASGHLGNFNDPMIDNKDSKIRYRADKIIEDYMLNEKGDENFVADGLSFDEMKRIIDEEGIVCPVSGTANWTDIRQFNLMFKTFQGVTEDSTNEIFLRPETAQGIFVNYKNVQRTMRKKLPFGIGQIGKSFRNEITPGNFIFRTREFEQMELEFFCKPGEEIEWQNYWKTFASQWLKDLNLSEEATRLRDHDADELSHYSNATTDIEYRFPFGWGELWGIASRTDFDLKKHSEHSGEDFQYHDQETGEKYIPYCIEPSLGADRVTLAFLCDAYDEEGVEGSKDSRTVLHFHPALAPYKAAVLPLSKKLSGDAIKVFEELSADFAIDFDESQSIGKRYRRQDEIGTPYCITFDFDSLEDEKVTVRDRDTMEQVRMPITELKSFLAEKVKF.

Substrate-binding residues include Arg98 and Glu174. ATP is bound by residues 206-208, 216-221, 290-291, and 334-337; these read RNE, FRTREF, EL, and GADR. Substrate is bound at residue 221-225; the sequence is FEQME. 330–334 contributes to the substrate binding site; that stretch reads EPSLG.

This sequence belongs to the class-II aminoacyl-tRNA synthetase family. Homodimer.

The protein resides in the cytoplasm. The catalysed reaction is tRNA(Gly) + glycine + ATP = glycyl-tRNA(Gly) + AMP + diphosphate. In terms of biological role, catalyzes the attachment of glycine to tRNA(Gly). This chain is Glycine--tRNA ligase, found in Staphylococcus saprophyticus subsp. saprophyticus (strain ATCC 15305 / DSM 20229 / NCIMB 8711 / NCTC 7292 / S-41).